The sequence spans 431 residues: 3-phosphoshikimate 1-carboxyvinyltransferase (431 aa).

3-phosphoshikimate contacts are provided by lysine 26, serine 27, and arginine 31. Phosphoenolpyruvate is bound at residue lysine 26. Phosphoenolpyruvate-binding residues include glycine 100 and arginine 129. Residues serine 175, serine 176, glutamine 177, aspartate 308, and glutamine 335 each contribute to the 3-phosphoshikimate site. Glutamine 177 contacts phosphoenolpyruvate. Catalysis depends on aspartate 308, which acts as the Proton acceptor. Residues arginine 339, arginine 381, and lysine 412 each coordinate phosphoenolpyruvate.

Belongs to the EPSP synthase family. As to quaternary structure, monomer.

It is found in the cytoplasm. The catalysed reaction is 3-phosphoshikimate + phosphoenolpyruvate = 5-O-(1-carboxyvinyl)-3-phosphoshikimate + phosphate. It participates in metabolic intermediate biosynthesis; chorismate biosynthesis; chorismate from D-erythrose 4-phosphate and phosphoenolpyruvate: step 6/7. In terms of biological role, catalyzes the transfer of the enolpyruvyl moiety of phosphoenolpyruvate (PEP) to the 5-hydroxyl of shikimate-3-phosphate (S3P) to produce enolpyruvyl shikimate-3-phosphate and inorganic phosphate. The chain is 3-phosphoshikimate 1-carboxyvinyltransferase from Opitutus terrae (strain DSM 11246 / JCM 15787 / PB90-1).